The sequence spans 56 residues: Potassium channel toxin alpha-KTx 9.2 (56 aa).

The signal sequence occupies residues 1 to 28; it reads MSRLFTLVLIVLAMNVMMAIISDPVVEA. 3 disulfide bridges follow: cysteine 31–cysteine 47, cysteine 34–cysteine 52, and cysteine 38–cysteine 54.

As to expression, expressed by the venom gland.

Its subcellular location is the secreted. Its function is as follows. Blocks small conductance calcium-activated potassium channels (KCNN, SK). Low toxicity by intracerebroventricular injection into mice. This is Potassium channel toxin alpha-KTx 9.2 from Olivierus martensii (Manchurian scorpion).